The primary structure comprises 460 residues: ATP synthase subunit beta (460 aa).

150–157 is an ATP binding site; that stretch reads GGAGVGKT.

Belongs to the ATPase alpha/beta chains family. As to quaternary structure, F-type ATPases have 2 components, CF(1) - the catalytic core - and CF(0) - the membrane proton channel. CF(1) has five subunits: alpha(3), beta(3), gamma(1), delta(1), epsilon(1). CF(0) has three main subunits: a(1), b(2) and c(9-12). The alpha and beta chains form an alternating ring which encloses part of the gamma chain. CF(1) is attached to CF(0) by a central stalk formed by the gamma and epsilon chains, while a peripheral stalk is formed by the delta and b chains.

The protein localises to the cell inner membrane. It catalyses the reaction ATP + H2O + 4 H(+)(in) = ADP + phosphate + 5 H(+)(out). Functionally, produces ATP from ADP in the presence of a proton gradient across the membrane. The catalytic sites are hosted primarily by the beta subunits. This is ATP synthase subunit beta from Serratia proteamaculans (strain 568).